The chain runs to 376 residues: N-acetyldiaminopimelate deacetylase (376 aa).

Asp-69 is an active-site residue. Glu-127 functions as the Proton acceptor in the catalytic mechanism.

It belongs to the peptidase M20A family. N-acetyldiaminopimelate deacetylase subfamily.

It catalyses the reaction N-acetyl-(2S,6S)-2,6-diaminopimelate + H2O = (2S,6S)-2,6-diaminopimelate + acetate. Its pathway is amino-acid biosynthesis; L-lysine biosynthesis via DAP pathway; LL-2,6-diaminopimelate from (S)-tetrahydrodipicolinate (acetylase route): step 3/3. Functionally, catalyzes the conversion of N-acetyl-diaminopimelate to diaminopimelate and acetate. The polypeptide is N-acetyldiaminopimelate deacetylase (Lactococcus lactis subsp. cremoris (strain SK11)).